A 968-amino-acid polypeptide reads, in one-letter code: RNA polymerase-associated protein RapA (968 aa).

The region spanning 163–332 is the Helicase ATP-binding domain; it reads EVGRRYAPRV…FARLRLLDPD (170 aa). 176–183 is a binding site for ATP; it reads DEVGLGKT. Positions 278–281 match the DEAH box motif; sequence DEAH. Residues 491–643 form the Helicase C-terminal domain; sequence RVDWLIAFLK…ELTCPSGHVL (153 aa).

Belongs to the SNF2/RAD54 helicase family. RapA subfamily. As to quaternary structure, interacts with the RNAP. Has a higher affinity for the core RNAP than for the holoenzyme. Its ATPase activity is stimulated by binding to RNAP.

Transcription regulator that activates transcription by stimulating RNA polymerase (RNAP) recycling in case of stress conditions such as supercoiled DNA or high salt concentrations. Probably acts by releasing the RNAP, when it is trapped or immobilized on tightly supercoiled DNA. Does not activate transcription on linear DNA. Probably not involved in DNA repair. The sequence is that of RNA polymerase-associated protein RapA from Shewanella putrefaciens (strain CN-32 / ATCC BAA-453).